Consider the following 233-residue polypeptide: Purine nucleoside phosphorylase DeoD-type (233 aa).

Histidine 4 contributes to the a purine D-ribonucleoside binding site. Phosphate contacts are provided by residues glycine 20, arginine 24, arginine 43, and 87 to 90; that span reads RVGT. A purine D-ribonucleoside contacts are provided by residues glutamate 162, 179–181, and 203–204; these read EME and SD. Aspartate 204 serves as the catalytic Proton donor.

Belongs to the PNP/UDP phosphorylase family. In terms of assembly, homohexamer; trimer of homodimers.

The enzyme catalyses a purine D-ribonucleoside + phosphate = a purine nucleobase + alpha-D-ribose 1-phosphate. It catalyses the reaction a purine 2'-deoxy-D-ribonucleoside + phosphate = a purine nucleobase + 2-deoxy-alpha-D-ribose 1-phosphate. In terms of biological role, catalyzes the reversible phosphorolytic breakdown of the N-glycosidic bond in the beta-(deoxy)ribonucleoside molecules, with the formation of the corresponding free purine bases and pentose-1-phosphate. The polypeptide is Purine nucleoside phosphorylase DeoD-type (Alkaliphilus metalliredigens (strain QYMF)).